The sequence spans 92 residues: Small ribosomal subunit protein uS19 (92 aa).

This sequence belongs to the universal ribosomal protein uS19 family.

Functionally, protein S19 forms a complex with S13 that binds strongly to the 16S ribosomal RNA. This is Small ribosomal subunit protein uS19 from Hyphomonas neptunium (strain ATCC 15444).